The following is a 284-amino-acid chain: NAD(P)H-hydrate epimerase (284 aa).

Residues 1-55 (MSGLRTLLGLGLLVSSSRFPRVVARGGPRCPGPAWWAARPMHLGDSTMAGGTVKY) constitute a mitochondrion transit peptide. In terms of domain architecture, YjeF N-terminal spans 61 to 271 (AQAVDEELFN…DLEKKYQLNL (211 aa)). Residue 115-119 (NNGGD) coordinates (6S)-NADPHX. N116 provides a ligand contact to K(+). At K140 the chain carries N6-succinyllysine. K(+) is bound at residue D181. (6S)-NADPHX contacts are provided by residues 185-191 (GFSFKGA) and D214. S217 lines the K(+) pocket.

This sequence belongs to the NnrE/AIBP family. As to quaternary structure, homodimer. Interacts with APOA1 and APOA2. It depends on K(+) as a cofactor. Undergoes physiological phosphorylation during sperm capacitation, downstream to PKA activation.

The protein resides in the mitochondrion. It localises to the secreted. The catalysed reaction is (6R)-NADHX = (6S)-NADHX. It carries out the reaction (6R)-NADPHX = (6S)-NADPHX. Its function is as follows. Catalyzes the epimerization of the S- and R-forms of NAD(P)HX, a damaged form of NAD(P)H that is a result of enzymatic or heat-dependent hydration. This is a prerequisite for the S-specific NAD(P)H-hydrate dehydratase to allow the repair of both epimers of NAD(P)HX. Accelerates cholesterol efflux from endothelial cells to high-density lipoprotein (HDL) and thereby regulates angiogenesis. In Monodelphis domestica (Gray short-tailed opossum), this protein is NAD(P)H-hydrate epimerase.